An 876-amino-acid polypeptide reads, in one-letter code: DNA mismatch repair protein MutS (876 aa).

626–633 (GPNMAGKS) provides a ligand contact to ATP. Positions 829–856 (FRAAPPPPAPAAPPKASQVEERLRAIQP) are disordered. Residues 832–841 (APPPPAPAAP) show a composition bias toward pro residues.

This sequence belongs to the DNA mismatch repair MutS family.

Functionally, this protein is involved in the repair of mismatches in DNA. It is possible that it carries out the mismatch recognition step. This protein has a weak ATPase activity. This is DNA mismatch repair protein MutS from Cereibacter sphaeroides (strain ATCC 17025 / ATH 2.4.3) (Rhodobacter sphaeroides).